A 279-amino-acid chain; its full sequence is Very long chain fatty acid elongase 1 (279 aa).

Position 1 is an N-acetylmethionine (M1). Transmembrane regions (helical) follow at residues 23–43 (PLMGSPLLMTSILLTYVYFVL), 61–81 (FMIVYNFSLVALSLYIVYEFL), 110–130 (VAWLFLFSKFIELMDTVIFIL), 137–154 (VTFLHVFHHSVLPWSWWW), 176–196 (VIMYLYYGLSAFGPVAQPYLW), 201–221 (MTAIQLIQFVLVSLHISQYYF), and 231–251 (VIIHLIWMYGTIFFMLFSNFW). A Di-lysine motif motif is present at residues 275–279 (KVKAN).

It belongs to the ELO family. ELOVL1 subfamily. Interacts with LASS2 and HSD17B12. Interacts with TECR. As to expression, ubiquitous.

The protein resides in the endoplasmic reticulum membrane. It catalyses the reaction a very-long-chain acyl-CoA + malonyl-CoA + H(+) = a very-long-chain 3-oxoacyl-CoA + CO2 + CoA. The catalysed reaction is eicosanoyl-CoA + malonyl-CoA + H(+) = 3-oxodocosanoyl-CoA + CO2 + CoA. It carries out the reaction (11Z)-eicosenoyl-CoA + malonyl-CoA + H(+) = 3-oxo-(13Z)-docosenoyl-CoA + CO2 + CoA. The enzyme catalyses docosanoyl-CoA + malonyl-CoA + H(+) = 3-oxotetracosanoyl-CoA + CO2 + CoA. It catalyses the reaction (13Z)-docosenoyl-CoA + malonyl-CoA + H(+) = 3-oxo-(15Z)-tetracosenoyl-CoA + CO2 + CoA. The catalysed reaction is tetracosanoyl-CoA + malonyl-CoA + H(+) = 3-oxohexacosanoyl-CoA + CO2 + CoA. It carries out the reaction hexacosanoyl-CoA + malonyl-CoA + H(+) = 3-oxooctacosanyol-CoA + CO2 + CoA. The enzyme catalyses octadecanoyl-CoA + malonyl-CoA + H(+) = 3-oxoeicosanoyl-CoA + CO2 + CoA. The protein operates within lipid metabolism; fatty acid biosynthesis. In terms of biological role, catalyzes the first and rate-limiting reaction of the four reactions that constitute the long-chain fatty acids elongation cycle. This endoplasmic reticulum-bound enzymatic process allows the addition of 2 carbons to the chain of long- and very long-chain fatty acids (VLCFAs) per cycle. Condensing enzyme that exhibits activity toward saturated and monounsaturated acyl-CoA substrates, with the highest activity towards C22:0 acyl-CoA. May participate in the production of both saturated and monounsaturated VLCFAs of different chain lengths that are involved in multiple biological processes as precursors of membrane lipids and lipid mediators. Important for saturated C24:0 and monounsaturated C24:1 sphingolipid synthesis. Indirectly inhibits RPE65 via production of VLCFAs. This chain is Very long chain fatty acid elongase 1, found in Homo sapiens (Human).